The sequence spans 374 residues: UPF0754 membrane protein SAR1937 (374 aa).

2 consecutive transmembrane segments (helical) span residues 4–24 (LFII…TNVI) and 354–374 (SLGF…AIFV).

Belongs to the UPF0754 family.

Its subcellular location is the cell membrane. The protein is UPF0754 membrane protein SAR1937 of Staphylococcus aureus (strain MRSA252).